Consider the following 153-residue polypeptide: Ribosome maturation factor RimP (153 aa).

This sequence belongs to the RimP family.

The protein resides in the cytoplasm. Functionally, required for maturation of 30S ribosomal subunits. This is Ribosome maturation factor RimP from Clostridioides difficile (strain 630) (Peptoclostridium difficile).